A 109-amino-acid polypeptide reads, in one-letter code: Defensin-B5 (109 aa).

An N-terminal signal peptide occupies residues 1 to 20 (MRGLLPFLFLLSFFLSPIQA). The tract at residues 21 to 44 (QPEGREEELEETWSEDRDQAPPRV) is disordered. Residues 21 to 70 (QPEGREEELEETWSEDRDQAPPRVVEESEVVGAENEAGLAAGRSYPWIIL) constitute a propeptide that is removed on maturation. Residues 34–44 (SEDRDQAPPRV) show a composition bias toward basic and acidic residues. Cystine bridges form between Cys-73-Cys-101, Cys-80-Cys-95, and Cys-85-Cys-102. Residues 107-109 (AVP) constitute a propeptide that is removed on maturation.

This sequence belongs to the beta-defensin family. As to expression, highly expressed in kidney, and expressed at lower levels in testis.

The protein resides in the secreted. In terms of biological role, has antimicrobial activity. This Ornithorhynchus anatinus (Duckbill platypus) protein is Defensin-B5.